The chain runs to 165 residues: 3-isopropylmalate dehydratase small subunit (165 aa).

It belongs to the LeuD family. LeuD type 2 subfamily. As to quaternary structure, heterodimer of LeuC and LeuD.

It carries out the reaction (2R,3S)-3-isopropylmalate = (2S)-2-isopropylmalate. It functions in the pathway amino-acid biosynthesis; L-leucine biosynthesis; L-leucine from 3-methyl-2-oxobutanoate: step 2/4. Its function is as follows. Catalyzes the isomerization between 2-isopropylmalate and 3-isopropylmalate, via the formation of 2-isopropylmaleate. This is 3-isopropylmalate dehydratase small subunit from Saccharolobus islandicus (strain Y.N.15.51 / Yellowstone #2) (Sulfolobus islandicus).